The sequence spans 259 residues: MLTIADRTFDSHLIMGTGGATSMAMLEESLVASGTELTTVAMRRHAATTTGESVFDLLRRLDITPLPNTAGCRTARDAVITAKLAREALGTNWVKVEVIADEHTLLPDVVELIDACELLVAEGFVVLAYTSDDPVVARRLEDVGCAAVMPLGSPIGTGLGILNPHNIELICSRAGVPVLLDAGVGTASDAALAMELGCDGVLLASAVNRCQDPVAMARAMRYAVDAGRLARGAGRIPKREHAVASSTFDGLASWSDQVL.

Lysine 95 serves as the catalytic Schiff-base intermediate with DXP. 1-deoxy-D-xylulose 5-phosphate-binding positions include glycine 156, 182-183 (AG), and 204-205 (AS).

Belongs to the ThiG family. Homotetramer. Forms heterodimers with either ThiH or ThiS.

The protein resides in the cytoplasm. The enzyme catalyses [ThiS sulfur-carrier protein]-C-terminal-Gly-aminoethanethioate + 2-iminoacetate + 1-deoxy-D-xylulose 5-phosphate = [ThiS sulfur-carrier protein]-C-terminal Gly-Gly + 2-[(2R,5Z)-2-carboxy-4-methylthiazol-5(2H)-ylidene]ethyl phosphate + 2 H2O + H(+). It functions in the pathway cofactor biosynthesis; thiamine diphosphate biosynthesis. In terms of biological role, catalyzes the rearrangement of 1-deoxy-D-xylulose 5-phosphate (DXP) to produce the thiazole phosphate moiety of thiamine. Sulfur is provided by the thiocarboxylate moiety of the carrier protein ThiS. In vitro, sulfur can be provided by H(2)S. The protein is Thiazole synthase of Corynebacterium efficiens (strain DSM 44549 / YS-314 / AJ 12310 / JCM 11189 / NBRC 100395).